We begin with the raw amino-acid sequence, 259 residues long: Light-harvesting complex stress-related protein 3.1, chloroplastic (259 aa).

The N-terminal 45 residues, 1–45, are a transit peptide targeting the chloroplast; that stretch reads MLANVVSRKASGLRQTPARATVAVKSVSGRRTTAAEPQTAAPVAA. Tyr51 is a binding site for chlorophyll b. Residues Phe66, Glu87, and His90 each coordinate chlorophyll a. Position 92 (Arg92) interacts with chlorophyll b. A helical membrane pass occupies residues 93-113; sequence VAMLAALGFVVGEQLQDFPLF. Gln130 contributes to the chlorophyll a binding site. A helical membrane pass occupies residues 137–157; that stretch reads EPLLIAIGVAESYRVAVGWAT. Residues Glu147 and Arg150 each coordinate chlorophyll b. Chlorophyll a is bound by residues Lys196, Glu197, Asn200, Arg202, and Gln214. The chain crosses the membrane as a helical span at residues 203–223; it reads LAMIAIAAFVAQELVEQTEIF.

The protein belongs to the light-harvesting chlorophyll a/b-binding (LHC) protein family. Interacts with the photosystem II-light-harvesting complex II (PSII-LHCII) supercomplex to form PSII-LHCII-LHCSR3 supercomplex.

It localises to the plastid. The protein resides in the chloroplast thylakoid membrane. In terms of biological role, required for non-photochemical quenching (NPQ), a mechanism that converts and dissipates the harmful excess absorbed light energy into heat and protect the photosynthetic apparatus from photo-oxidative damage. NPQ includes dissipating excess light energy to heat (qE) and the reversible coupling of LHCII to photosystems (state transitions or qT), which are considered separate NPQ mechanisms. Is responsible for most of the excess light energy to heat dissipation (qE), also known as energy-dependent chlorophyll fluorescence quenching activity of chlorophyll excited states. Involved in a de-coupling and re-coupling of energy transfer to photosystem II (PSII) during qT. Binds chlorophyll a and b. Is able to sense luminal acidification of the thylakoid membranes, which occurs along with elevated electron flow caused by excess light. Establishes interactions with photosystem II (PSII) antenna components upon lumen acidification, and protonation of lumen-exposed, negatively charged residues both in LHCSR3 and in PSII antenna components. Mediates excitation energy transfer from light-harvesting complex II (LHCII) to photosystem I (PSI), rather than photosystem II (PSII), at low pH, which mimics the acidified lumen of the thylakoid membranes in high light-exposed chloroplasts. Activates PSI-dependent fluorescence quenching in addition to dissipating excitation energy in LHCII to avoid photooxidative stress under excess light. Contributes with PGRL1 to the regulation of electron flow upstream of photosystem I (PSI), and limits the accumulation of electrons on the PSI acceptor side, thus avoiding PSI photoinhibition. This Chlamydomonas reinhardtii (Chlamydomonas smithii) protein is Light-harvesting complex stress-related protein 3.1, chloroplastic.